A 406-amino-acid chain; its full sequence is Cytochrome bc1 complex Rieske iron-sulfur subunit (406 aa).

Transmembrane regions (helical) follow at residues 56 to 76, 98 to 118, and 166 to 186; these read VGIW…VYLF, LLGL…IFYI, and MLGI…GGMV. The region spanning 291–388 is the Rieske domain; the sequence is HGPRNAVMLI…ITVDEEGYLV (98 aa). 4 residues coordinate [2Fe-2S] cluster: cysteine 331, histidine 333, cysteine 350, and histidine 353. A disulfide bond links cysteine 336 and cysteine 352.

This sequence belongs to the Rieske iron-sulfur protein family. The cytochrome bc1 complex is composed of a cytochrome b (QcrB), the Rieske iron-sulfur protein (QcrA) and a diheme cytochrome c (QcrC) subunit. The bc1 complex forms a supercomplex with cytochrome c oxidase (cytochrome aa3). The cofactor is [2Fe-2S] cluster.

It is found in the cell membrane. Functionally, iron-sulfur subunit of the cytochrome bc1 complex, an essential component of the respiratory electron transport chain required for ATP synthesis. The bc1 complex catalyzes the oxidation of menaquinol and the reduction of cytochrome c in the respiratory chain. The bc1 complex operates through a Q-cycle mechanism that couples electron transfer to generation of the proton gradient that drives ATP synthesis. The sequence is that of Cytochrome bc1 complex Rieske iron-sulfur subunit (qcrA) from Corynebacterium diphtheriae (strain ATCC 700971 / NCTC 13129 / Biotype gravis).